The primary structure comprises 362 residues: Putative sphingolipid delta(4)-desaturase/C4-monooxygenase (362 aa).

Helical transmembrane passes span 45–61, 71–91, and 107–127; these read YVVSSLVIFQIFMCWLL, LEAYFCGGIINHAMTLAIHDI, and FFGMWANLPIAVPISVSFKKY. A Histidine box-1 motif is present at residues 89 to 93; the sequence is HDISH. A Histidine box-2 motif is present at residues 128–132; the sequence is HVEHH. Transmembrane regions (helical) follow at residues 160-177 and 198-218; these read LLWLALQPFFYGFRPLII and LLILHFFGVKSLFYLLFGTII. Residues 259 to 263 carry the Histidine box-3 motif; that stretch reads HVEHH.

The protein belongs to the fatty acid desaturase type 1 family. DEGS subfamily.

Its subcellular location is the membrane. The catalysed reaction is an N-acyl-15-methylhexadecasphinganine + 2 Fe(II)-[cytochrome b5] + O2 + 2 H(+) = an N-acyl-4-hydroxy-15-methylhexadecasphinganine + 2 Fe(III)-[cytochrome b5] + H2O. The enzyme catalyses an N-acyl-15-methylhexadecasphinganine + 2 Fe(II)-[cytochrome b5] + O2 + 2 H(+) = an N-acyl-15-methylhexadecasphing-4-enine + 2 Fe(III)-[cytochrome b5] + 2 H2O. It carries out the reaction a dihydroceramide + 2 Fe(II)-[cytochrome b5] + O2 + 2 H(+) = a phytoceramide + 2 Fe(III)-[cytochrome b5] + H2O. It catalyses the reaction an N-acylsphinganine + 2 Fe(II)-[cytochrome b5] + O2 + 2 H(+) = an N-acylsphing-4-enine + 2 Fe(III)-[cytochrome b5] + 2 H2O. The catalysed reaction is N-octanoylsphinganine + 2 Fe(II)-[cytochrome b5] + O2 + 2 H(+) = N-octanoyl-4-hydroxysphinganine + 2 Fe(III)-[cytochrome b5] + H2O. The enzyme catalyses an N-acylsphinganine + 2 Fe(II)-[cytochrome b5] + O2 + 2 H(+) = an N-acyl-(4R)-4-hydroxysphinganine + 2 Fe(III)-[cytochrome b5] + H2O. The protein operates within lipid metabolism; sphingolipid metabolism. Its function is as follows. Bifunctional enzyme which acts both as a sphingolipid delta(4)-desaturase and a sphingolipid C4-monooxygenase. C.elegans contain specific sphingoid bases, which are unique or different in structure compared to the sphingoid bases found in other animals. Two examples of these distinctive compounds are: 15-methylhexadecasphinganine and 15-methylhexadecasphing-4-enine and this enzyme can catalyze their conversion. This chain is Putative sphingolipid delta(4)-desaturase/C4-monooxygenase (ttm-5), found in Caenorhabditis elegans.